The primary structure comprises 132 residues: MRHRKSGRQLNRNSSHRKAMFKNMANSLFLHETIRTTLSKAKELRRVVEPLITKAKIDSVANRRNIFSKLRDDAIVAKLFTELAPFYKDRPGGYIRILKAGFRAGDKALMAIVQLVDFETTTDIVAETTDFS.

This sequence belongs to the bacterial ribosomal protein bL17 family. As to quaternary structure, part of the 50S ribosomal subunit. Contacts protein L32.

The sequence is that of Large ribosomal subunit protein bL17 from Ruthia magnifica subsp. Calyptogena magnifica.